The primary structure comprises 947 residues: Transcriptional regulator WAR1 (947 aa).

The span at 1–10 shows a compositional bias: basic and acidic residues; the sequence is MSDTTPEKGS. Residues 1–52 are disordered; that stretch reads MSDTTPEKGSVDSVSPSASNGSNTNNPLNNSSPQPLKSNESDKKPKVTRRSV. Low complexity predominate over residues 19-38; that stretch reads SNGSNTNNPLNNSSPQPLKS. The zn(2)-C6 fungal-type DNA-binding region spans 54 to 86; the sequence is CKSCHSLKVKCTPSDPNNPSAPCVRCINANRIC. Residues 96-222 form a disordered region; it reads RRKKSEILEA…SPTSKDDEIN (127 aa). Positions 129–142 are enriched in low complexity; the sequence is NSSENYSSSINNAN. 2 stretches are compositionally biased toward polar residues: residues 143 to 158 and 167 to 185; these read DSSL…TFDP and QASS…QSAA.

In terms of assembly, homodimer.

It is found in the nucleus. Transcription factor required for yeast cell adherence to silicone substrate. Plays a role in resistance to weak organic acids such as acetate and sorbate. Binds in vitro to a nitric oxide-responsive element (NORE) but seems not to be involved in response to nitrosative stress. This is Transcriptional regulator WAR1 (WAR1) from Candida albicans (strain SC5314 / ATCC MYA-2876) (Yeast).